Here is a 305-residue protein sequence, read N- to C-terminus: Acetaldehyde dehydrogenase (305 aa).

Ser13 to Ile16 serves as a coordination point for NAD(+). Cys128 acts as the Acyl-thioester intermediate in catalysis. Residues Ser159–Asn167 and Asn278 each bind NAD(+).

The protein belongs to the acetaldehyde dehydrogenase family.

The catalysed reaction is acetaldehyde + NAD(+) + CoA = acetyl-CoA + NADH + H(+). This chain is Acetaldehyde dehydrogenase, found in Chloroflexus aurantiacus (strain ATCC 29366 / DSM 635 / J-10-fl).